A 438-amino-acid chain; its full sequence is Phosphatidylcholine-sterol acyltransferase (438 aa).

A signal peptide spans 1 to 24; sequence MGLPGSPWQRVLLLLGLLLPPATP. N-linked (GlcNAc...) asparagine glycosylation is present at N44. C74 and C98 are joined by a disulfide. An N-linked (GlcNAc...) asparagine glycan is attached at N108. S205 (nucleophile) is an active-site residue. N296 carries N-linked (GlcNAc...) asparagine glycosylation. An intrachain disulfide couples C337 to C380. The active-site Charge relay system is the D369. A glycan (N-linked (GlcNAc...) asparagine) is linked at N397. The active-site Charge relay system is the H401. A glycan (N-linked (GlcNAc...) asparagine) is linked at N408.

The protein belongs to the AB hydrolase superfamily. Lipase family. As to expression, detected in blood plasma. Produced and secreted by astrocytes (at protein level). Abundantly expressed in liver, brain and testis with highest levels in liver. In the brain, found in cerebellum, cerebral cortex, hippocampus and brain stem. Located to neurons and neuroglia.

The protein localises to the secreted. The catalysed reaction is a sterol + a 1,2-diacyl-sn-glycero-3-phosphocholine = a sterol ester + a 1-acyl-sn-glycero-3-phosphocholine. It carries out the reaction a 1-O-alkyl-2-acetyl-sn-glycero-3-phosphocholine + H2O = a 1-O-alkyl-sn-glycero-3-phosphocholine + acetate + H(+). The enzyme catalyses a 1-hexadecanoyl-2-acyl-sn-glycero-3-phosphocholine + (24S)-hydroxycholesterol = (24S)-24-hydroxycholesterol ester + 1-hexadecanoyl-sn-glycero-3-phosphocholine. It catalyses the reaction (24S)-hydroxycholesterol + 1-hexadecanoyl-2-(9Z,12Z-octadecadienoyl)-sn-glycero-3-phosphocholine = (24S)-hydroxycholesterol 3-linoleoate + 1-hexadecanoyl-sn-glycero-3-phosphocholine. The catalysed reaction is 1-hexadecanoyl-2-(5Z,8Z,11Z,14Z-eicosatetraenoyl)-sn-glycero-3-phosphocholine + cholesterol = cholesteryl (5Z,8Z,11Z,14Z)-eicosatetraenoate + 1-hexadecanoyl-sn-glycero-3-phosphocholine. It carries out the reaction 1-hexadecanoyl-2-(9Z-octadecenoyl)-sn-glycero-3-phosphocholine + cholesterol = cholesteryl (9Z-octadecenoate) + 1-hexadecanoyl-sn-glycero-3-phosphocholine. The enzyme catalyses 1-hexadecanoyl-2-(8Z,11Z,14Z-eicosatrienoyl)-sn-glycero-3-phosphocholine + cholesterol = cholesteryl (8Z,11Z,14Z)-eicosatrienoate + 1-hexadecanoyl-sn-glycero-3-phosphocholine. It catalyses the reaction 1-hexadecanoyl-2-(5Z,8Z,11Z-eicosatrienoyl)-sn-glycero-3-phosphocholine + cholesterol = cholesteryl (5Z,8Z,11Z)-eicosatrienoate + 1-hexadecanoyl-sn-glycero-3-phosphocholine. The catalysed reaction is 1-hexadecanoyl-2-(5Z,8Z,11Z,14Z,17Z-eicosapentaenoyl)-sn-glycero-3-phosphocholine + cholesterol = (5Z,8Z,11Z,14Z,17Z-eicosapentaenoyl)-cholesterol + 1-hexadecanoyl-sn-glycero-3-phosphocholine. It carries out the reaction 1-hexadecanoyl-2-(9Z,12Z-octadecadienoyl)-sn-glycero-3-phosphocholine + cholesterol = cholesteryl (9Z,12Z)-octadecadienoate + 1-hexadecanoyl-sn-glycero-3-phosphocholine. The enzyme catalyses 1-hexadecanoyl-2-(6Z,9Z,12Z-octadecatrienoyl)-sn-glycero-3-phosphocholine + cholesterol = (6Z,9Z,12Z-octadecatrienoyl)-cholesterol + 1-hexadecanoyl-sn-glycero-3-phosphocholine. It catalyses the reaction 1-hexadecanoyl-2-(11Z,14Z,17Z-eicosatrienoyl)-sn-glycero-3-phosphocholine + cholesterol = (11Z,14Z,17Z-eicosatrienoyl)-cholesterol + 1-hexadecanoyl-sn-glycero-3-phosphocholine. The catalysed reaction is 1-hexadecanoyl-2-(9Z,12Z,15Z-octadecatrienoyl)-sn-glycero-3-phosphocholine + cholesterol = (9Z,12Z,15Z-octadecatrienoyl)-cholesterol + 1-hexadecanoyl-sn-glycero-3-phosphocholine. It carries out the reaction 1-hexadecanoyl-2-(9Z,12Z-octadecadienoyl)-sn-glycero-3-phosphocholine + H2O = (9Z,12Z)-octadecadienoate + 1-hexadecanoyl-sn-glycero-3-phosphocholine + H(+). The enzyme catalyses 1-hexadecanoyl-2-(5Z,8Z,11Z,14Z-eicosatetraenoyl)-sn-glycero-3-phosphocholine + H2O = 1-hexadecanoyl-sn-glycero-3-phosphocholine + (5Z,8Z,11Z,14Z)-eicosatetraenoate + H(+). It catalyses the reaction a 1-O-alkyl-2-acetyl-sn-glycero-3-phosphocholine + 1-hexadecanoyl-sn-glycero-3-phosphocholine = 1-hexadecanoyl-2-acetyl-sn-glycero-3-phosphocholine + a 1-O-alkyl-sn-glycero-3-phosphocholine. With respect to regulation, APOA1 is the most potent activator in plasma. Also activated by APOE, APOC1 and APOA4. In terms of biological role, central enzyme in the extracellular metabolism of plasma lipoproteins. Synthesized mainly in the liver and secreted into plasma where it converts cholesterol and phosphatidylcholines (lecithins) to cholesteryl esters and lysophosphatidylcholines on the surface of high and low density lipoproteins (HDLs and LDLs). The cholesterol ester is then transported back to the liver. Also produced in the brain by primary astrocytes, and esterifies free cholesterol on nascent APOE-containing lipoproteins secreted from glia and influences cerebral spinal fluid (CSF) APOE- and APOA1 levels. Together with APOE and the cholesterol transporter ABCA1, plays a key role in the maturation of glial-derived, nascent lipoproteins. Required for remodeling high-density lipoprotein particles into their spherical forms. Has a preference for plasma 16:0-18:2 or 18:O-18:2 phosphatidylcholines. Catalyzes the hydrolysis of 1-O-alkyl-2-acetyl-sn-glycero-3-phosphocholine (platelet-activating factor or PAF) to 1-O-alkyl-sn-glycero-3-phosphocholine (lyso-PAF). Also catalyzes the transfer of the acetate group from PAF to 1-hexadecanoyl-sn-glycero-3-phosphocholine forming lyso-PAF. Catalyzes the esterification of (24S)-hydroxycholesterol (24(S)OH-C), also known as cerebrosterol to produce 24(S)OH-C monoesters. This chain is Phosphatidylcholine-sterol acyltransferase (Lcat), found in Mus musculus (Mouse).